Here is a 266-residue protein sequence, read N- to C-terminus: Glucosamine-6-phosphate deaminase (266 aa).

The active-site Proton acceptor; for enolization step is the Asp72. Asp141 serves as the catalytic For ring-opening step. His143 acts as the Proton acceptor; for ring-opening step in catalysis. The For ring-opening step role is filled by Glu148.

The protein belongs to the glucosamine/galactosamine-6-phosphate isomerase family. NagB subfamily. As to quaternary structure, homohexamer.

The catalysed reaction is alpha-D-glucosamine 6-phosphate + H2O = beta-D-fructose 6-phosphate + NH4(+). Its pathway is amino-sugar metabolism; N-acetylneuraminate degradation; D-fructose 6-phosphate from N-acetylneuraminate: step 5/5. Its activity is regulated as follows. Allosterically activated by N-acetylglucosamine 6-phosphate (GlcNAc6P). Catalyzes the reversible isomerization-deamination of glucosamine 6-phosphate (GlcN6P) to form fructose 6-phosphate (Fru6P) and ammonium ion. The protein is Glucosamine-6-phosphate deaminase of Klebsiella pneumoniae (strain 342).